A 217-amino-acid chain; its full sequence is Small ribosomal subunit protein uS3 (217 aa).

Residues 38 to 106 (IRQLIQTKLA…QVHINIVEIK (69 aa)) form the KH type-2 domain.

This sequence belongs to the universal ribosomal protein uS3 family. Part of the 30S ribosomal subunit. Forms a tight complex with proteins S10 and S14.

In terms of biological role, binds the lower part of the 30S subunit head. Binds mRNA in the 70S ribosome, positioning it for translation. The polypeptide is Small ribosomal subunit protein uS3 (Lactococcus lactis subsp. lactis (strain IL1403) (Streptococcus lactis)).